Here is a 537-residue protein sequence, read N- to C-terminus: CTP synthase (537 aa).

The amidoligase domain stretch occupies residues 1 to 265 (MVHFIFVTGG…DNKVLKFFNI (265 aa)). Serine 13 provides a ligand contact to CTP. Serine 13 serves as a coordination point for UTP. Residues 14–19 (SLGKGL) and aspartate 71 contribute to the ATP site. Mg(2+)-binding residues include aspartate 71 and glutamate 139. CTP is bound by residues 146–148 (DIE) and lysine 222. Residue lysine 222 coordinates UTP. In terms of domain architecture, Glutamine amidotransferase type-1 spans 290–536 (RIAIIAKYHK…IKAAIEYNKC (247 aa)). Glycine 352 lines the L-glutamine pocket. The active-site Nucleophile; for glutamine hydrolysis is the cysteine 379. L-glutamine contacts are provided by residues 380–383 (FGMQ), glutamate 403, and arginine 464. Active-site residues include histidine 509 and glutamate 511.

This sequence belongs to the CTP synthase family. As to quaternary structure, homotetramer.

The enzyme catalyses UTP + L-glutamine + ATP + H2O = CTP + L-glutamate + ADP + phosphate + 2 H(+). The catalysed reaction is L-glutamine + H2O = L-glutamate + NH4(+). It carries out the reaction UTP + NH4(+) + ATP = CTP + ADP + phosphate + 2 H(+). The protein operates within pyrimidine metabolism; CTP biosynthesis via de novo pathway; CTP from UDP: step 2/2. With respect to regulation, allosterically activated by GTP, when glutamine is the substrate; GTP has no effect on the reaction when ammonia is the substrate. The allosteric effector GTP functions by stabilizing the protein conformation that binds the tetrahedral intermediate(s) formed during glutamine hydrolysis. Inhibited by the product CTP, via allosteric rather than competitive inhibition. Catalyzes the ATP-dependent amination of UTP to CTP with either L-glutamine or ammonia as the source of nitrogen. Regulates intracellular CTP levels through interactions with the four ribonucleotide triphosphates. The polypeptide is CTP synthase (Rickettsia peacockii (strain Rustic)).